The chain runs to 234 residues: Chromatin remodeling protein EBS (234 aa).

The 116-residue stretch at 29 to 144 (KVVRAGDCVL…AATGAFTPDR (116 aa)) folds into the BAH domain. The segment at 146–197 (AVYCKCEMPYNPDDLMVQCEGCKDWYHPACVGMTIEEAKKLDHFVCAECSSD) adopts a PHD-type zinc-finger fold.

This sequence belongs to the SHL1/EBS protein family. As to quaternary structure, recognizes di- and trimethylated histone H3 at lysine 4 (H3K4me2 and H3K4me3). Interacts with HDA6. Expressed ubiquitously, with higher levels in floral buds.

Its subcellular location is the nucleus. In terms of biological role, chromatin remodeling factor that binds to methylated histone (e.g. H3K4me2/3) to prevent their acetylation (e.g. H3K9K14Ac), likely by recruiting histone deacetylase (HDAC) complexes, and thus regulating the transcription of target genes. Negative regulator in developmental processes in a gibberellic acid- (GA-) dependent manner, such as germination, flowering induction, and flower organ specification, probably by modulating developmental gene expression. Involved in the chromatin-mediated repression of floral initiation and controls genes regulating flowering. Negatively regulates the expression of the floral integrator FT epigenetically, by preventing high levels of H3 acetylation, thus maintaining an inactive chromatin conformation at FT locus. The chain is Chromatin remodeling protein EBS from Arabidopsis thaliana (Mouse-ear cress).